The primary structure comprises 533 residues: Apolipoprotein N-acyltransferase (533 aa).

A run of 6 helical transmembrane segments spans residues 17 to 37, 74 to 94, 105 to 125, 127 to 147, 178 to 198, and 205 to 225; these read ALLA…FGFF, WLFG…ALLI, LAIL…AVLA, LLWS…GLLE, VIGV…PALL, and VPGI…GYYA. The region spanning 245–495 is the CN hydrolase domain; sequence VQPAIDQEAK…QGFVDSTLSG (251 aa). Glu-290 (proton acceptor) is an active-site residue. Lys-354 is a catalytic residue. Cys-407 acts as the Nucleophile in catalysis. A helical transmembrane segment spans residues 509 to 529; that stretch reads YFWLIIGIVGMIAVISRMGFI.

Belongs to the CN hydrolase family. Apolipoprotein N-acyltransferase subfamily.

It localises to the cell inner membrane. The catalysed reaction is N-terminal S-1,2-diacyl-sn-glyceryl-L-cysteinyl-[lipoprotein] + a glycerophospholipid = N-acyl-S-1,2-diacyl-sn-glyceryl-L-cysteinyl-[lipoprotein] + a 2-acyl-sn-glycero-3-phospholipid + H(+). Its pathway is protein modification; lipoprotein biosynthesis (N-acyl transfer). Catalyzes the phospholipid dependent N-acylation of the N-terminal cysteine of apolipoprotein, the last step in lipoprotein maturation. In Rhizobium rhizogenes (strain K84 / ATCC BAA-868) (Agrobacterium radiobacter), this protein is Apolipoprotein N-acyltransferase.